A 177-amino-acid polypeptide reads, in one-letter code: Ribonuclease alpha-sarcin (177 aa).

The first 27 residues, Met1–Arg27, serve as a signal peptide directing secretion. Intrachain disulfides connect Cys33–Cys175 and Cys103–Cys159. His77 is a catalytic residue. The segment at Asp86 to His119 is disordered. Basic and acidic residues predominate over residues Gly99–His119. Residue Glu123 is the Proton acceptor of the active site. The active-site Proton donor is His164.

Belongs to the ribonuclease U2 family.

Its subcellular location is the secreted. It catalyses the reaction a 28S rRNA containing guanosine-adenosine pair + H2O = an [RNA fragment]-3'-adenosine-3'-phosphate + a 5'-a hydroxy-guanosine-3'-[RNA fragment].. Alpha-sarcin is specific for purines in both single- and double-stranded RNA. Its toxic action on eukaryotic cells is the result of cleavage of a single phosphodiester bond in the 60S subunit of ribosomes. Inhibits both the EFl (elongation factor 1)-dependent binding of aminoacyl-tRNA and the GTP-dependent binding of EF2 (elongation factor 2) to ribosomes. This chain is Ribonuclease alpha-sarcin (sar), found in Aspergillus giganteus.